The chain runs to 170 residues: Arginine repressor (170 aa).

It belongs to the ArgR family.

The protein localises to the cytoplasm. It functions in the pathway amino-acid biosynthesis; L-arginine biosynthesis [regulation]. Regulates arginine biosynthesis genes. This Mycobacterium tuberculosis (strain ATCC 25177 / H37Ra) protein is Arginine repressor.